Consider the following 512-residue polypeptide: Cytochrome P450 72A15 (512 aa).

Residues 2–22 (EISVASVTISVVLAVVSWWIW) traverse the membrane as a helical segment. C460 provides a ligand contact to heme.

Belongs to the cytochrome P450 family. Heme serves as cofactor.

Its subcellular location is the membrane. This chain is Cytochrome P450 72A15 (CYP72A15), found in Arabidopsis thaliana (Mouse-ear cress).